A 466-amino-acid polypeptide reads, in one-letter code: 23S rRNA (uracil(1939)-C(5))-methyltransferase RlmD (466 aa).

One can recognise a TRAM domain in the interval 1-54 (MVDVLNIESLDLEARGIAHRDGKVLFVEGALPGERVTVQTVRRKPSYEIAKVEE). [4Fe-4S] cluster is bound by residues C67, C73, C76, and C155. Residues Q264, F293, N298, E314, N342, and D363 each coordinate S-adenosyl-L-methionine. The active-site Nucleophile is the C393.

This sequence belongs to the class I-like SAM-binding methyltransferase superfamily. RNA M5U methyltransferase family. RlmD subfamily.

It catalyses the reaction uridine(1939) in 23S rRNA + S-adenosyl-L-methionine = 5-methyluridine(1939) in 23S rRNA + S-adenosyl-L-homocysteine + H(+). Functionally, catalyzes the formation of 5-methyl-uridine at position 1939 (m5U1939) in 23S rRNA. The polypeptide is 23S rRNA (uracil(1939)-C(5))-methyltransferase RlmD (Bordetella pertussis (strain Tohama I / ATCC BAA-589 / NCTC 13251)).